The following is a 78-amino-acid chain: Acyl carrier protein (78 aa).

The 76-residue stretch at 2–77 (DDLFKKIQQL…DAYEFIKSQQ (76 aa)) folds into the Carrier domain. O-(pantetheine 4'-phosphoryl)serine is present on S37.

It belongs to the acyl carrier protein (ACP) family. 4'-phosphopantetheine is transferred from CoA to a specific serine of apo-ACP by AcpS. This modification is essential for activity because fatty acids are bound in thioester linkage to the sulfhydryl of the prosthetic group.

It is found in the cytoplasm. It participates in lipid metabolism; fatty acid biosynthesis. Its function is as follows. Carrier of the growing fatty acid chain in fatty acid biosynthesis. The chain is Acyl carrier protein from Treponema denticola (strain ATCC 35405 / DSM 14222 / CIP 103919 / JCM 8153 / KCTC 15104).